Reading from the N-terminus, the 685-residue chain is Linoleate 9/13-lipoxygenase (685 aa).

Residues 1–19 (MKRRSVLLSGVALSGTALA) form the signal peptide. The 564-residue stretch at 122–685 (ASLPASAAAQ…PSRIPASTNI (564 aa)) folds into the Lipoxygenase domain. Positions 377, 382, 555, 559, and 685 each coordinate Fe cation.

The protein belongs to the lipoxygenase family. In terms of assembly, monomer. The cofactor is Fe cation.

The protein resides in the periplasm. The catalysed reaction is (9Z,12Z)-octadecadienoate + O2 = (9S)-hydroperoxy-(10E,12Z)-octadecadienoate. It catalyses the reaction (9Z)-octadecenoate + O2 = (8E,10S)-10-hydroperoxy-octadeca-8-enoate. The enzyme catalyses (9Z,12Z)-octadecadienoate + O2 = (8E,10S,12Z)-10-hydroperoxyoctadeca-8,12-dienoate. It carries out the reaction (9Z,12Z,15Z)-octadecatrienoate + O2 = (8E,10S,12Z,15Z)-10-hydroperoxyoctadeca-8,12,15-trienoate. The catalysed reaction is (9Z,12Z)-octadecadienoate + O2 = (13S)-hydroperoxy-(9Z,11E)-octadecadienoate. It catalyses the reaction (9Z,12Z,15Z)-octadecatrienoate + O2 = (13S)-hydroperoxy-(9Z,11E,15Z)-octadecatrienoate. Inhibited by Ba(2+), Zn(2+) and Fe(3+). Functionally, in presence of oxygen, converts linoleate into (9S)-hydroperoxy-10,12-octadecenoate (9HPOD), which spontaneously decomposes to the corresponding 9-hydroxy-10,12-octadecenoate (9HOD), and into 13-hydroperoxy-9,11-octadecenoate (13HPOD) which spontaneously decomposes to the corresponding 13-hydroxy-9,11-octadecenoate (13HOD). Also active on linolenate. To a lesser extent, is also able to convert oleate into (10S)-hydroperoxy-8E-octadecenoate, which spontaneously decomposes to the corresponding 10-hydroxy-8E-octadecenoate. Is almost not active on arachidonate. In Pseudomonas aeruginosa, this protein is Linoleate 9/13-lipoxygenase (lox).